We begin with the raw amino-acid sequence, 225 residues long: UPF0758 protein swp_2203 (225 aa).

The 123-residue stretch at 102–224 (ILSDPDLTRD…IVSFAERGWI (123 aa)) folds into the MPN domain. H173, H175, and D186 together coordinate Zn(2+). A JAMM motif motif is present at residues 173 to 186 (HNHPSGIAEPSTAD).

The protein belongs to the UPF0758 family.

In Shewanella piezotolerans (strain WP3 / JCM 13877), this protein is UPF0758 protein swp_2203.